We begin with the raw amino-acid sequence, 207 residues long: MARYIGPKCKLSRREGTDLQLKSGVKPFDVKTKKHAKAPGQHGQARGKQSEYSLQLREKQKVRRMYGVLERQFSNYYKEAARVKGATGENLLKLLESRLDNVVYRMGFGSTRAEARQLVSHRSITLNGRRVNIASIQVKAGDVIAVHEGAKQQLRIKNAIELAAQRGIPAWMDVDHSKLEGTFKAAPDRSDLPAEINESLIVELYSK.

Residues 26–53 (KPFDVKTKKHAKAPGQHGQARGKQSEYS) are disordered. The region spanning 97–159 (SRLDNVVYRM…AKQQLRIKNA (63 aa)) is the S4 RNA-binding domain.

The protein belongs to the universal ribosomal protein uS4 family. As to quaternary structure, part of the 30S ribosomal subunit. Contacts protein S5. The interaction surface between S4 and S5 is involved in control of translational fidelity.

Its function is as follows. One of the primary rRNA binding proteins, it binds directly to 16S rRNA where it nucleates assembly of the body of the 30S subunit. Functionally, with S5 and S12 plays an important role in translational accuracy. The protein is Small ribosomal subunit protein uS4 of Acinetobacter baylyi (strain ATCC 33305 / BD413 / ADP1).